The chain runs to 392 residues: Formate-dependent phosphoribosylglycinamide formyltransferase (392 aa).

N(1)-(5-phospho-beta-D-ribosyl)glycinamide-binding positions include 22 to 23 and glutamate 82; that span reads EL. Residues arginine 114, lysine 155, 160–165, 195–198, and glutamate 203 contribute to the ATP site; these read SSGKGQ and EGLV. The region spanning 119 to 308 is the ATP-grasp domain; the sequence is RLAAETLSLP…EFALHVRAFL (190 aa). Mg(2+) contacts are provided by glutamate 267 and glutamate 279. N(1)-(5-phospho-beta-D-ribosyl)glycinamide is bound by residues aspartate 286, lysine 355, and 362-363; that span reads RR.

Belongs to the PurK/PurT family. Homodimer.

The catalysed reaction is N(1)-(5-phospho-beta-D-ribosyl)glycinamide + formate + ATP = N(2)-formyl-N(1)-(5-phospho-beta-D-ribosyl)glycinamide + ADP + phosphate + H(+). The protein operates within purine metabolism; IMP biosynthesis via de novo pathway; N(2)-formyl-N(1)-(5-phospho-D-ribosyl)glycinamide from N(1)-(5-phospho-D-ribosyl)glycinamide (formate route): step 1/1. Its function is as follows. Involved in the de novo purine biosynthesis. Catalyzes the transfer of formate to 5-phospho-ribosyl-glycinamide (GAR), producing 5-phospho-ribosyl-N-formylglycinamide (FGAR). Formate is provided by PurU via hydrolysis of 10-formyl-tetrahydrofolate. This chain is Formate-dependent phosphoribosylglycinamide formyltransferase, found in Sodalis glossinidius (strain morsitans).